An 86-amino-acid chain; its full sequence is Large ribosomal subunit protein bL31B (86 aa).

The protein belongs to the bacterial ribosomal protein bL31 family. Type B subfamily. Part of the 50S ribosomal subunit.

This chain is Large ribosomal subunit protein bL31B, found in Yersinia enterocolitica serotype O:8 / biotype 1B (strain NCTC 13174 / 8081).